The following is a 566-amino-acid chain: Peroxisomal leader peptide-processing protease (566 aa).

Residues 319–531 form a serine protease region; that stretch reads ALAALLPPEV…LQPALQQYSQ (213 aa). Catalysis depends on charge relay system residues His-372, Asp-408, and Ser-481.

The protein belongs to the peptidase S1B family. Homodimer. Forms a heterodimer with the C-terminal cleavage product (45 kDa form). Forms a heterodimer with the N-terminal cleavage product (15 kDa form). Interacts with PEX5. Interacts with LONP2. Post-translationally, self-cleavage gives rise to an N-terminal 15-kDa fragment and C-terminal 45-kDa fragment upon import into the peroxisomes. The full-lengh TYSND1 is the active the proteolytic processing of PTS1- and PTS2-proteins and in self-cleavage, and intermolecular self-cleavage of TYSND1 down-regulates its protease activity.

It localises to the peroxisome. In terms of biological role, peroxisomal protease that mediates both the removal of the leader peptide from proteins containing a PTS2 target sequence and processes several PTS1-containing proteins. Catalyzes the processing of PTS1-proteins involved in the peroxisomal beta-oxidation of fatty acids. The sequence is that of Peroxisomal leader peptide-processing protease (TYSND1) from Homo sapiens (Human).